The primary structure comprises 150 residues: MKSIEVHTDGSCLGNPGPGGWAALLRYNGREKELAGGEAVSTNNRMELMAAIMALETLTEPCQIVLHTDSQYVRQGITEWMPGWVRRNWKTAGCDPVKNRELWERLHAATQRHRIDWRWVKGHNGDPDNERVDVLARNQAIAQRGGLATS.

The RNase H type-1 domain maps to 1–141 (MKSIEVHTDG…VDVLARNQAI (141 aa)). Residues D9, E47, D69, and D133 each contribute to the Mg(2+) site.

It belongs to the RNase H family. As to quaternary structure, monomer. It depends on Mg(2+) as a cofactor.

It localises to the cytoplasm. The enzyme catalyses Endonucleolytic cleavage to 5'-phosphomonoester.. Endonuclease that specifically degrades the RNA of RNA-DNA hybrids. The sequence is that of Ribonuclease H from Xanthomonas axonopodis pv. citri (strain 306).